An 847-amino-acid chain; its full sequence is DNA mismatch repair protein MutS (847 aa).

602–609 lines the ATP pocket; that stretch reads GPNMSGKS. The segment at 788 to 807 is disordered; the sequence is EKREASLPASRTDSQKVSEQ. The segment covering 796-807 has biased composition (polar residues); it reads ASRTDSQKVSEQ.

It belongs to the DNA mismatch repair MutS family.

In terms of biological role, this protein is involved in the repair of mismatches in DNA. It is possible that it carries out the mismatch recognition step. This protein has a weak ATPase activity. The sequence is that of DNA mismatch repair protein MutS from Streptococcus gordonii (strain Challis / ATCC 35105 / BCRC 15272 / CH1 / DL1 / V288).